The following is a 495-amino-acid chain: MKSILKAMALSLTTSIALATILLFVYKFATRSKSTKKSLPEPWRLPIIGHMHHLIGTTPHRGVRDLARKYGSLMHLQLGEVPTIVVSSPKWAKEILTTYDISFANRPETLTGEIVLYHNTDVVLAPYGEYWRQLRKICTLELLSVKKVKSFQSLREEECWNLVQEIKASGSGRPVNLSENVFKLIATILSRAAFGKGIKDQKELTEIVKEILRQTGGFDVADIFPSKKFLHHLSGKRARLTSLRKKIDNLIDNLVAEHTVNTSSKTNETLLDVLLRLKDSAEFPLTSDNIKAIILDMFGAGTDTSSSTIEWAISELIKCPKAMEKVQAELRKALNGKEKIHEEDIQELSYLNMVIKETLRLHPPLPLVLPRECRQPVNLAGYNIPNKTKLIVNVFAINRDPEYWKDAEAFIPERFENSSATVMGAEYEYLPFGAGRRMCPGAALGLANVQLPLANILYHFNWKLPNGVSYDQIDMTESSGATMQRKTELLLVPSF.

Residues 1 to 6 (MKSILK) lie on the Cytoplasmic side of the membrane. Residues 7 to 29 (AMALSLTTSIALATILLFVYKFA) form a helical; Signal-anchor for type II membrane protein membrane-spanning segment. The Lumenal portion of the chain corresponds to 30–495 (TRSKSTKKSL…KTELLLVPSF (466 aa)). 5 N-linked (GlcNAc...) asparagine glycosylation sites follow: asparagine 176, asparagine 261, asparagine 267, asparagine 386, and asparagine 417. Cysteine 439 contributes to the heme binding site.

The protein belongs to the cytochrome P450 family. Requires heme as cofactor. In terms of tissue distribution, highly expressed both in apical and sub-apical cells of glandular secretory trichomes. Detected in flower buds, leaves and roots. Also present in non-glandular trichome cells.

It localises to the endoplasmic reticulum membrane. It catalyses the reaction (+)-amorpha-4,11-diene + 3 reduced [NADPH--hemoprotein reductase] + 3 O2 = (+)-artemisinate + 3 oxidized [NADPH--hemoprotein reductase] + 4 H2O + 4 H(+). It functions in the pathway sesquiterpene biosynthesis. Functionally, involved in the biosynthesis of the antimalarial endoperoxide artemisinin. Catalyzes three consecutive oxidations of amorpha-4,11-diene to produce artemisinic acid, with artemisinic alcohol and artemisinic aldehyde as intermediates products, but is unable to oxidize germacrene A. No activity with limonene, alpha-pinene, beta-pinene, pinocarveol, (-)-alloisolongifolene, caryophyllene, (-)-alpha-gurjunene, (+)-gamma-gurjunene, (+)-ledene, (+)-beta-selinene and (+)-valencene as substrates. The polypeptide is Amorpha-4,11-diene 12-monooxygenase (Artemisia annua (Sweet wormwood)).